The chain runs to 75 residues: Porwaprin-b (75 aa).

Residues 1–24 form the signal peptide; sequence MSSGGLLLLLGLLTLWAELTPVSG. One can recognise a WAP domain in the interval 27 to 72; that stretch reads RPVKPGLCPPRPQKPPCVKECKNDWSCRGEQKCCHYGCIYECRDPI. Intrachain disulfides connect Cys-34-Cys-60, Cys-43-Cys-64, Cys-47-Cys-59, and Cys-53-Cys-68.

The protein belongs to the venom waprin family. In terms of tissue distribution, expressed by the venom gland.

It localises to the secreted. Its function is as follows. Damages membranes of susceptible bacteria. Has no hemolytic activity. Not toxic to mice. Does not inhibit the proteinases elastase and cathepsin G. This Pseudechis porphyriacus (Red-bellied black snake) protein is Porwaprin-b.